A 343-amino-acid polypeptide reads, in one-letter code: Biotin synthase (343 aa).

The Radical SAM core domain occupies 36 to 254 (NTIQISTLLS…IAVARIMMPK (219 aa)). The [4Fe-4S] cluster site is built by Cys51, Cys55, and Cys58. Positions 95, 126, 186, and 258 each coordinate [2Fe-2S] cluster.

The protein belongs to the radical SAM superfamily. Biotin synthase family. As to quaternary structure, homodimer. The cofactor is [4Fe-4S] cluster. [2Fe-2S] cluster serves as cofactor.

The catalysed reaction is (4R,5S)-dethiobiotin + (sulfur carrier)-SH + 2 reduced [2Fe-2S]-[ferredoxin] + 2 S-adenosyl-L-methionine = (sulfur carrier)-H + biotin + 2 5'-deoxyadenosine + 2 L-methionine + 2 oxidized [2Fe-2S]-[ferredoxin]. The protein operates within cofactor biosynthesis; biotin biosynthesis; biotin from 7,8-diaminononanoate: step 2/2. Its function is as follows. Catalyzes the conversion of dethiobiotin (DTB) to biotin by the insertion of a sulfur atom into dethiobiotin via a radical-based mechanism. In Buchnera aphidicola subsp. Acyrthosiphon pisum (strain 5A), this protein is Biotin synthase.